Here is a 76-residue protein sequence, read N- to C-terminus: MPKRILNGVVTSDANAQTVTVSVERRFTHPVLKKTIRKSKKYRAHDAENAFKVGDKVRIQECAPMSKTKRWEVIAN.

The protein belongs to the universal ribosomal protein uS17 family. As to quaternary structure, part of the 30S ribosomal subunit.

One of the primary rRNA binding proteins, it binds specifically to the 5'-end of 16S ribosomal RNA. This chain is Small ribosomal subunit protein uS17, found in Dinoroseobacter shibae (strain DSM 16493 / NCIMB 14021 / DFL 12).